The sequence spans 449 residues: Metacaspase-1 (449 aa).

Positions 1-132 (MFPGQGRHTY…YSRPPTNQQS (132 aa)) are disordered. Residues 10-26 (YGGQQQLLQLQQYNYGP) are compositionally biased toward low complexity. The segment covering 27–55 (PQGPPPNGYGPPPGPPPNGYGPPPGPPPQ) has biased composition (pro residues). Residues 56-66 (NSWGYGNPSGT) show a composition bias toward polar residues. Composition is skewed to low complexity over residues 67-91 (QSSN…YQRP) and 98-112 (QSGN…NGEP). A compositionally biased stretch (polar residues) spans 119–132 (GSGQYSRPPTNQQS). Catalysis depends on residues H232 and C293.

It belongs to the peptidase C14B family.

In terms of biological role, involved in cell death (apoptosis). The polypeptide is Metacaspase-1 (MCA1) (Lodderomyces elongisporus (strain ATCC 11503 / CBS 2605 / JCM 1781 / NBRC 1676 / NRRL YB-4239) (Yeast)).